The primary structure comprises 367 residues: Probable sugar phosphate/phosphate translocator At1g48230 (367 aa).

A run of 10 helical transmembrane segments spans residues 9-29 (LVLTYIYLLIYIILSSGVILY), 43-63 (LPITLTMIHMGFSGFVAFLLI), 76-96 (FEIYVTCVVPISAFFASSLWF), 106-126 (VAFIQMLKALMPVATFLMAVV), 140-160 (MVLVSVGVVVSSYGEINFNVI), 163-183 (VYQVMGIFAEALRLVLTQVLL), 193-213 (VTSLYYIAPCSFVFLSLPWYV), 229-249 (WIFFSNALCALALNFSIFLVI), 257-276 (IRVAGVLKDWILIALSTVIF), and 280-302 (TITGLNITGYAIALCGVVMYNYI). The span at 321–330 (ITKDWKEKNS) shows a compositional bias: basic and acidic residues. Positions 321-341 (ITKDWKEKNSSDGGSPRGLEL) are disordered.

This sequence belongs to the TPT transporter family. TPT (TC 2.A.7.9) subfamily.

The protein resides in the membrane. In Arabidopsis thaliana (Mouse-ear cress), this protein is Probable sugar phosphate/phosphate translocator At1g48230.